The chain runs to 516 residues: Delta(24)-sterol reductase (516 aa).

A signal peptide spans 1–22; the sequence is MEPAVSLAVCALLFLLWVRVKG. The Lumenal segment spans residues 23 to 31; the sequence is LEFVLIHQR. Residues 32 to 52 form a helical membrane-spanning segment; that stretch reads WVFVCLFLLPLSLIFDIYYYV. Over 53–516 the chain is Cytoplasmic; the sequence is RAWVVFKLSS…YDKICKAARH (464 aa). The region spanning 58-234 is the FAD-binding PCMH-type domain; sequence FKLSSAPRLH…VAAEIRIIPA (177 aa). 163–175 is a binding site for FAD; the sequence is TVGGLIMGTGIES.

Belongs to the FAD-binding oxidoreductase/transferase type 4 family. In terms of assembly, interacts with DHCR7; this interaction regulates DHCR7 activity. FAD serves as cofactor.

The protein localises to the endoplasmic reticulum membrane. The protein resides in the golgi apparatus membrane. It catalyses the reaction cholesterol + NADP(+) = desmosterol + NADPH + H(+). It carries out the reaction lanosterol + NADPH + H(+) = 24,25-dihydrolanosterol + NADP(+). The catalysed reaction is 5alpha-cholest-8-en-3beta-ol + NADP(+) = zymosterol + NADPH + H(+). The protein operates within steroid biosynthesis; cholesterol biosynthesis. Its function is as follows. Catalyzes the reduction of the delta-24 double bond of sterol intermediates during cholesterol biosynthesis. In addition to its cholesterol-synthesizing activity, can protect cells from oxidative stress by reducing caspase 3 activity during apoptosis induced by oxidative stress. Also protects against amyloid-beta peptide-induced apoptosis. The polypeptide is Delta(24)-sterol reductase (DHCR24) (Macaca fascicularis (Crab-eating macaque)).